The chain runs to 457 residues: tRNA-2-methylthio-N(6)-dimethylallyladenosine synthase (457 aa).

Residues 3–120 enclose the MTTase N-terminal domain; that stretch reads KKVYVKTFGC…LPQMIDARRA (118 aa). [4Fe-4S] cluster is bound by residues Cys12, Cys49, Cys83, Cys157, Cys161, and Cys164. In terms of domain architecture, Radical SAM core spans 143–377; sequence RVEGPSAFVS…QATIEENVAR (235 aa). The TRAM domain maps to 380–447; that stretch reads QSMVGKVERI…PHSLRGELVL (68 aa).

It belongs to the methylthiotransferase family. MiaB subfamily. Monomer. The cofactor is [4Fe-4S] cluster.

The protein localises to the cytoplasm. It carries out the reaction N(6)-dimethylallyladenosine(37) in tRNA + (sulfur carrier)-SH + AH2 + 2 S-adenosyl-L-methionine = 2-methylsulfanyl-N(6)-dimethylallyladenosine(37) in tRNA + (sulfur carrier)-H + 5'-deoxyadenosine + L-methionine + A + S-adenosyl-L-homocysteine + 2 H(+). Catalyzes the methylthiolation of N6-(dimethylallyl)adenosine (i(6)A), leading to the formation of 2-methylthio-N6-(dimethylallyl)adenosine (ms(2)i(6)A) at position 37 in tRNAs that read codons beginning with uridine. The protein is tRNA-2-methylthio-N(6)-dimethylallyladenosine synthase of Burkholderia cenocepacia (strain HI2424).